A 310-amino-acid polypeptide reads, in one-letter code: Delta(1)-pyrroline-2-carboxylate reductase 1 (310 aa).

This sequence belongs to the ornithine cyclodeaminase/mu-crystallin family.

It carries out the reaction L-proline + NAD(+) = 1-pyrroline-2-carboxylate + NADH + H(+). The catalysed reaction is L-proline + NADP(+) = 1-pyrroline-2-carboxylate + NADPH + H(+). Functionally, catalyzes the reduction of Delta(1)-pyrroline-2-carboxylate (Pyr2C) to L-proline, using NADPH as the electron donor. May be involved in a degradation pathway that converts trans-3-hydroxy-L-proline (t3LHyp) to L-proline. The chain is Delta(1)-pyrroline-2-carboxylate reductase 1 from Burkholderia multivorans (strain ATCC 17616 / 249).